The chain runs to 57 residues: Bowman-Birk type proteinase inhibitor B4 (57 aa).

Disulfide bonds link cysteine 6/cysteine 55, cysteine 12/cysteine 17, cysteine 26/cysteine 33, and cysteine 30/cysteine 47.

Belongs to the Bowman-Birk serine protease inhibitor family. Expressed in bulb (at protein level).

Functionally, serine protease inhibitor. Inhibits trypsin (Ki = 110 nM) and very weakly inhibits chymotrypsin (Ki =1200 nM). Does not inhibit bacterial subtilisin. The chain is Bowman-Birk type proteinase inhibitor B4 from Hyacinthus orientalis (Common hyacinth).